The following is a 430-amino-acid chain: MKQAFRVALGFFLLWASVLHAEVRIEITQGVDTARPIGVVPFKWAGPGAAPEDIGGIVAADLRNSGKFNPLDTSRLPQQPATASEVTPPAWTALGIDAVVVGQVQPSAAGSYVVSYQLVDTSGNPGSILAQNQFKVARKWLRYAAHTASDETFEKLTGIKGAFRTRIAYVVQTNGGQYRYELRVADYDGFNQTPVHRSPQPLMSPAWSPDGSKLAYVTFESGRSALVIQTLDSGAIRQVASFPQHNGAPAFSPDGSKLAFVLSKTGNMNLYVMDLGSGQVRQVTEGRSNNTEPSWFPDSQTLAYTSDQGGRPQVYKTNINGGTPQRLSWEGSQNQNADVSPDGKFLVMVSTNNGAQHIAKLDLATNAVQVLTDTFLDETPSVAPNGTMVIYSATQGLGSVLQLVSTDGRFKARLPATDGQVKNPAWSPYL.

The signal sequence occupies residues 1 to 21 (MKQAFRVALGFFLLWASVLHA).

Belongs to the TolB family. As to quaternary structure, the Tol-Pal system is composed of five core proteins: the inner membrane proteins TolA, TolQ and TolR, the periplasmic protein TolB and the outer membrane protein Pal. They form a network linking the inner and outer membranes and the peptidoglycan layer.

The protein localises to the periplasm. In terms of biological role, part of the Tol-Pal system, which plays a role in outer membrane invagination during cell division and is important for maintaining outer membrane integrity. TolB occupies a key intermediary position in the Tol-Pal system because it communicates directly with both membrane-embedded components, Pal in the outer membrane and TolA in the inner membrane. In Sodalis glossinidius (strain morsitans), this protein is Tol-Pal system protein TolB.